The sequence spans 419 residues: Chalcone synthase D (419 aa).

Cys-164 is a catalytic residue.

It belongs to the thiolase-like superfamily. Chalcone/stilbene synthases family.

It carries out the reaction (E)-4-coumaroyl-CoA + 3 malonyl-CoA + 3 H(+) = 2',4,4',6'-tetrahydroxychalcone + 3 CO2 + 4 CoA. The protein operates within secondary metabolite biosynthesis; flavonoid biosynthesis. Its function is as follows. The primary product of this enzyme is 4,2',4',6'-tetrahydroxychalcone (also termed naringenin-chalcone or chalcone) which can under specific conditions spontaneously isomerize into naringenin. This is Chalcone synthase D (CHSD) from Petunia hybrida (Petunia).